An 836-amino-acid chain; its full sequence is Probable RING finger protein 207 homolog (836 aa).

The RING-type zinc-finger motif lies at 8–42 (CTICKNDFEEPILFSCQHTTCRKCSNGSPSCKTCS). The B box-type 1; atypical zinc finger occupies 68–115 (EEMEQCANCEQITLPMFYCETCQQSLCLACRNVTHQARMFSSHKIISS). 4 residues coordinate Zn(2+): cysteine 73, cysteine 76, cysteine 97, and histidine 102. The B box-type 2; degenerate zinc-finger motif lies at 122 to 164 (YSSSLCKDHNEPYILYCSDVRKLVCIQCFNGRPLEERHSFISI). Residues 527–557 (QNRIMAIEKEEENRRLNQEAKKKEELAGQSA) are a coiled coil. Residues 540-552 (RRLNQEAKKKEEL) are compositionally biased toward basic and acidic residues. A disordered region spans residues 540–571 (RRLNQEAKKKEELAGQSAAMKSLKHGKTKRKE). Residues 561–571 (SLKHGKTKRKE) are compositionally biased toward basic residues.

The sequence is that of Probable RING finger protein 207 homolog from Caenorhabditis briggsae.